The chain runs to 260 residues: Protein phosphatase 1 regulatory subunit 35 (260 aa).

The segment at 1-100 (MMGFGASALE…PLLVAGAPGD (100 aa)) is disordered. Residues serine 46 and serine 53 each carry the phosphoserine modification. Residues 64–76 (RKGRRGGSRRGRQ) are compositionally biased toward basic residues.

It belongs to the PPP1R35 family. Interacts with PPP1CA; this interaction mediates the PPP1CA phosphatase activity inhibition. Interacts with RTTN; this interaction allows the mutual recruitment to the centriole.

It localises to the cytoplasm. Its subcellular location is the cytoskeleton. It is found in the microtubule organizing center. The protein localises to the centrosome. The protein resides in the centriole. Its function is as follows. During centriole duplication, plays a role in the centriole elongation by promoting the recruitment of the microtubule-binding elongation machinery through its interaction with TTTN, leading to the centriole to centrosome conversion. In addition may play a role in the primary cilia assembly. The protein is Protein phosphatase 1 regulatory subunit 35 of Mus musculus (Mouse).